The primary structure comprises 341 residues: uncharacterized protein (341 aa).

The segment at 125–146 (DTVKHNGSGPRPEQASSHVHYS) is disordered.

The protein belongs to the cycloisomerase 2 family.

This is an uncharacterized protein from Lactococcus lactis subsp. cremoris (strain MG1363).